The sequence spans 660 residues: tRNA 5-methylaminomethyl-2-thiouridine biosynthesis bifunctional protein MnmC (660 aa).

The tRNA (mnm(5)s(2)U34)-methyltransferase stretch occupies residues 1-235 (MTITRHARID…KWEVLRGTFI (235 aa)). The interval 266–660 (IGAGLAGCAT…LRGLIRGGGK (395 aa)) is FAD-dependent cmnm(5)s(2)U34 oxidoreductase.

It in the N-terminal section; belongs to the methyltransferase superfamily. tRNA (mnm(5)s(2)U34)-methyltransferase family. In the C-terminal section; belongs to the DAO family. FAD is required as a cofactor.

The protein localises to the cytoplasm. The enzyme catalyses 5-aminomethyl-2-thiouridine(34) in tRNA + S-adenosyl-L-methionine = 5-methylaminomethyl-2-thiouridine(34) in tRNA + S-adenosyl-L-homocysteine + H(+). Catalyzes the last two steps in the biosynthesis of 5-methylaminomethyl-2-thiouridine (mnm(5)s(2)U) at the wobble position (U34) in tRNA. Catalyzes the FAD-dependent demodification of cmnm(5)s(2)U34 to nm(5)s(2)U34, followed by the transfer of a methyl group from S-adenosyl-L-methionine to nm(5)s(2)U34, to form mnm(5)s(2)U34. This is tRNA 5-methylaminomethyl-2-thiouridine biosynthesis bifunctional protein MnmC from Pseudomonas savastanoi pv. phaseolicola (strain 1448A / Race 6) (Pseudomonas syringae pv. phaseolicola (strain 1448A / Race 6)).